Here is a 307-residue protein sequence, read N- to C-terminus: Pseudouridine-5'-phosphate glycosidase (307 aa).

Catalysis depends on E25, which acts as the Proton donor. Substrate is bound by residues K86 and V106. D138 lines the Mn(2+) pocket. 140 to 142 (SAD) provides a ligand contact to substrate. K159 functions as the Nucleophile in the catalytic mechanism.

It belongs to the pseudouridine-5'-phosphate glycosidase family. In terms of assembly, homotrimer. Requires Mn(2+) as cofactor.

The enzyme catalyses D-ribose 5-phosphate + uracil = psi-UMP + H2O. Catalyzes the reversible cleavage of pseudouridine 5'-phosphate (PsiMP) to ribose 5-phosphate and uracil. Functions biologically in the cleavage direction, as part of a pseudouridine degradation pathway. The protein is Pseudouridine-5'-phosphate glycosidase of Caldanaerobacter subterraneus subsp. tengcongensis (strain DSM 15242 / JCM 11007 / NBRC 100824 / MB4) (Thermoanaerobacter tengcongensis).